The sequence spans 356 residues: uncharacterized protein (356 aa).

The protein resides in the cytoplasm. The protein localises to the nucleus. This is an uncharacterized protein from Saccharomyces cerevisiae (strain ATCC 204508 / S288c) (Baker's yeast).